The sequence spans 54 residues: Large ribosomal subunit protein bL33 (54 aa).

This sequence belongs to the bacterial ribosomal protein bL33 family.

The protein is Large ribosomal subunit protein bL33 of Thermus thermophilus (strain ATCC BAA-163 / DSM 7039 / HB27).